We begin with the raw amino-acid sequence, 114 residues long: Hydrogenase maturation factor HypA (114 aa).

Ni(2+) is bound at residue His2. Cys73, Cys76, Cys90, and Cys93 together coordinate Zn(2+).

Belongs to the HypA/HybF family.

Its function is as follows. Involved in the maturation of [NiFe] hydrogenases. Required for nickel insertion into the metal center of the hydrogenase. The chain is Hydrogenase maturation factor HypA from Klebsiella pneumoniae (strain 342).